We begin with the raw amino-acid sequence, 242 residues long: Coat protein (242 aa).

Residues 1-16 (MGDQPRPPVPPAPGSN) are compositionally biased toward pro residues. Disordered regions lie at residues 1-41 (MGDQ…VANQ) and 219-242 (SNST…GPDA). The span at 219-232 (SNSTLLTKGASRST) shows a compositional bias: polar residues.

It belongs to the potexvirus capsid protein family.

It localises to the virion. Its function is as follows. Required for genome encapsidation. Forms ribonucleoprotein complexes along with TGB1 helicase and viral RNA. This chain is Coat protein, found in Strawberry mild yellow edge-associated virus (SMYEaV).